Reading from the N-terminus, the 336-residue chain is tRNA N6-adenosine threonylcarbamoyltransferase (336 aa).

Fe cation is bound by residues H111 and H115. Residues 134–138 (LVSGG), D167, G180, and N270 contribute to the substrate site. D298 serves as a coordination point for Fe cation.

Belongs to the KAE1 / TsaD family. It depends on Fe(2+) as a cofactor.

The protein localises to the cytoplasm. The enzyme catalyses L-threonylcarbamoyladenylate + adenosine(37) in tRNA = N(6)-L-threonylcarbamoyladenosine(37) in tRNA + AMP + H(+). Functionally, required for the formation of a threonylcarbamoyl group on adenosine at position 37 (t(6)A37) in tRNAs that read codons beginning with adenine. Is involved in the transfer of the threonylcarbamoyl moiety of threonylcarbamoyl-AMP (TC-AMP) to the N6 group of A37, together with TsaE and TsaB. TsaD likely plays a direct catalytic role in this reaction. The polypeptide is tRNA N6-adenosine threonylcarbamoyltransferase (Acinetobacter baumannii (strain AB307-0294)).